A 213-amino-acid polypeptide reads, in one-letter code: THAP domain-containing protein 1 (213 aa).

The THAP-type zinc finger occupies 1–81; the sequence is MVQSCSAYGC…LKENAVPTIF (81 aa). Residues 134 to 137 carry the HCFC1-binding motif (HBM) motif; sequence DHNY. Residues 139–185 are involved in homodimer formation; the sequence is VEDTMHQRKRIHQLEQQVEKLRKKLKTAQQRCRRQERQLEKLKEVVH. A coiled-coil region spans residues 139-190; sequence VEDTMHQRKRIHQLEQQVEKLRKKLKTAQQRCRRQERQLEKLKEVVHFQKEK.

This sequence belongs to the THAP1 family. Homodimer. Interacts with PAWR. Component of a THAP1/THAP3-HCFC1-OGT complex that contains, either THAP1 or THAP3, HCFC1 and OGT. Interacts with OGT. Interacts (via the HBM) with HCFC1 (via the Kelch-repeat domain); the interaction recruits HCFC1 to the RRM1 promoter. Highly expressed in heart, skeletal muscle, kidney and liver. Weaker expression in brain and placenta.

The protein localises to the nucleus. It is found in the nucleoplasm. Its subcellular location is the PML body. In terms of biological role, DNA-binding transcription regulator that regulates endothelial cell proliferation and G1/S cell-cycle progression. Specifically binds the 5'-[AT]NTNN[GT]GGCA[AGT]-3' core DNA sequence and acts by modulating expression of pRB-E2F cell-cycle target genes, including RRM1. Component of a THAP1/THAP3-HCFC1-OGT complex that is required for the regulation of the transcriptional activity of RRM1. May also have pro-apoptotic activity by potentiating both serum-withdrawal and TNF-induced apoptosis. The protein is THAP domain-containing protein 1 (THAP1) of Homo sapiens (Human).